The primary structure comprises 416 residues: Squalene synthase (416 aa).

Residues Arg-52 and Arg-77 each coordinate NADP(+). Mg(2+) contacts are provided by Asp-80, Glu-83, and Asp-84. An NADP(+)-binding site is contributed by Arg-218. Residues 284–304 (SVFNFCAIPQVMAIATLAACY) traverse the membrane as a helical segment. Residues Lys-315 and Arg-317 each contribute to the NADP(+) site. A helical membrane pass occupies residues 384-404 (PIYLSFIMLLAALSWQYLSTL).

This sequence belongs to the phytoene/squalene synthase family. Requires Mg(2+) as cofactor.

Its subcellular location is the endoplasmic reticulum membrane. It carries out the reaction 2 (2E,6E)-farnesyl diphosphate + NADPH + H(+) = squalene + 2 diphosphate + NADP(+). The catalysed reaction is 2 (2E,6E)-farnesyl diphosphate + NADH + H(+) = squalene + 2 diphosphate + NAD(+). It catalyses the reaction presqualene diphosphate + NADH + H(+) = squalene + diphosphate + NAD(+). The enzyme catalyses presqualene diphosphate + NADPH + H(+) = squalene + diphosphate + NADP(+). It carries out the reaction 2 (2E,6E)-farnesyl diphosphate = presqualene diphosphate + diphosphate. Its pathway is terpene metabolism; lanosterol biosynthesis; lanosterol from farnesyl diphosphate: step 1/3. Its function is as follows. Catalyzes the condensation of 2 farnesyl pyrophosphate (FPP) moieties to form squalene. Proceeds in two distinct steps. In the first half-reaction, two molecules of FPP react to form the stable presqualene diphosphate intermediate (PSQPP), with concomitant release of a proton and a molecule of inorganic diphosphate. In the second half-reaction, PSQPP undergoes heterolysis, isomerization, and reduction with NADPH or NADH to form squalene. It is the first committed enzyme of the sterol biosynthesis pathway. The sequence is that of Squalene synthase (Fdft1) from Mus musculus (Mouse).